A 292-amino-acid polypeptide reads, in one-letter code: Fat storage-inducing transmembrane protein 1 (292 aa).

At 1–18 (MERGPVVGAGRGAGARIR) the chain is on the lumenal side. Residues 19–39 (ALLGGLVRVLLWVASALLYFG) form a helical membrane-spanning segment. The Cytoplasmic segment spans residues 40–54 (SEQAARLLGSPCLRR). The helical transmembrane segment at 55–75 (LYHAWLAAVVIFGPLLQFHVN) threads the bilayer. The Lumenal portion of the chain corresponds to 76–94 (PRTIFASHGNFFNIKFVNS). The chain crosses the membrane as a helical span at residues 95-115 (AWGWTCTFLGGFVLLVVFLAT). Over 116–141 (RRVAVTARHLSRLVVGAAVWRGAGRA) the chain is Cytoplasmic. The chain crosses the membrane as a helical span at residues 142-162 (FLLIEDLTGSCFEPLPQGLLL). The Lumenal portion of the chain corresponds to 163–187 (HELPDRRSCLAAGHQWRGYTVSSHT). His186 is a catalytic residue. The chain crosses the membrane as a helical span at residues 188–208 (FLLTFCCLLMAEEAAVFAKYL). Over 209 to 220 (AHGLPAGAPLRL) the chain is Cytoplasmic. Residues 221 to 241 (VFLLNVLLLGLWNFLLLCTVI) form a helical membrane-spanning segment. At 242–249 (YFHQYTHK) the chain is on the lumenal side. His244 is a catalytic residue. The chain crosses the membrane as a helical span at residues 250 to 270 (VVGAAVGTFAWYLTYGSWYHQ). Over 271–292 (PWSPGSPGHGLFPRPHSIHKHN) the chain is Cytoplasmic.

This sequence belongs to the FIT family. FIT1 subfamily.

It is found in the endoplasmic reticulum membrane. Functionally, plays an important role in the formation of lipid droplets (LDs) which are storage organelles at the center of lipid and energy homeostasis. Directly binds to diacylglycerol (DAGs) and triacylglycerol. This chain is Fat storage-inducing transmembrane protein 1, found in Bos taurus (Bovine).